A 686-amino-acid chain; its full sequence is MKPSWLQCRKVTSAGGLGGPLPGSSPARGAGAALRALVVPGPRGGLGGRGCRALSSGSGSEYKTHFAASVTDPERFWGKAAEQISWYKPWTKTLENKHSPSTRWFVEGMLNICYNAVDRHIENGKGDKIAIIYDSPVTNTKATFTYKEVLEQVSKLAGVLVKHGIKKGDTVVIYMPMIPQAMYTMLACARIGAIHSLIFGGFASKELSSRIDHVKPKVVVTASFGIEPGRRVEYVPLVEEALKIGQHKPDKILIYNRPNMEAVPLAPGRDLDWDEEMAKAQSHDCVPVLSEHPLYILYTSGTTGLPKGVIRPTGGYAVMLHWSMSSIYGLQPGEVWWAASDLGWVVGHSYICYGPLLHGNTTVLYEGKPVGTPDAGAYFRVLAEHGVAALFTAPTAIRAIRQQDPGAALGKQYSLTRFKTLFVAGERCDVETLEWSKNVFRVPVLDHWWQTETGSPITASCVGLGNSKTPPPGQAGKSVPGYNVMILDDNMQKLKARCLGNIVVKLPLPPGAFSGLWKNQEAFKHLYFEKFPGYYDTMDAGYMDEEGYLYVMSRVDDVINVAGHRISAGAIEESILSHGTVADCAVVGKEDPLKGHVPLALCVLRKDINATEEQVLEEIVKHVRQNIGPVAAFRNAVFVKQLPKTRSGKIPRSALSAIVNGKPYKITSTIEDPSIFGHVEEMLKQA.

The N-terminal 29 residues, 1 to 29 (MKPSWLQCRKVTSAGGLGGPLPGSSPARG), are a transit peptide targeting the mitochondrion. 227–230 (EPGR) contacts CoA. Residues 425-427 (GER) and 446-451 (DHWWQT) contribute to the ATP site. An N6-succinyllysine modification is found at Lys-518. The residue at position 524 (Lys-524) is an N6-acetyllysine. Residues Asp-539, Arg-554, and Arg-565 each contribute to the ATP site. CoA is bound at residue Arg-624.

It belongs to the ATP-dependent AMP-binding enzyme family.

It localises to the mitochondrion matrix. It carries out the reaction acetate + ATP + CoA = acetyl-CoA + AMP + diphosphate. It catalyses the reaction propanoate + ATP + CoA = propanoyl-CoA + AMP + diphosphate. The enzyme catalyses butanoate + ATP + CoA = butanoyl-CoA + AMP + diphosphate. In terms of biological role, catalyzes the synthesis of acetyl-CoA from short-chain fatty acids. Propionate is the preferred substrate. Can utilize acetate and butyrate with a much lower affinity. This Homo sapiens (Human) protein is Acyl-CoA synthetase short-chain family member 3, mitochondrial (ACSS3).